The sequence spans 100 residues: Large ribosomal subunit protein eL36A (100 aa).

An N-acetylthreonine modification is found at Thr-2.

It belongs to the eukaryotic ribosomal protein eL36 family. Component of the large ribosomal subunit (LSU). Mature yeast ribosomes consist of a small (40S) and a large (60S) subunit. The 40S small subunit contains 1 molecule of ribosomal RNA (18S rRNA) and 33 different proteins (encoded by 57 genes). The large 60S subunit contains 3 rRNA molecules (25S, 5.8S and 5S rRNA) and 46 different proteins (encoded by 81 genes). Post-translationally, N-terminally acetylated by acetyltransferase NatA.

Its subcellular location is the cytoplasm. Its function is as follows. Component of the ribosome, a large ribonucleoprotein complex responsible for the synthesis of proteins in the cell. The small ribosomal subunit (SSU) binds messenger RNAs (mRNAs) and translates the encoded message by selecting cognate aminoacyl-transfer RNA (tRNA) molecules. The large subunit (LSU) contains the ribosomal catalytic site termed the peptidyl transferase center (PTC), which catalyzes the formation of peptide bonds, thereby polymerizing the amino acids delivered by tRNAs into a polypeptide chain. The nascent polypeptides leave the ribosome through a tunnel in the LSU and interact with protein factors that function in enzymatic processing, targeting, and the membrane insertion of nascent chains at the exit of the ribosomal tunnel. This is Large ribosomal subunit protein eL36A from Saccharomyces cerevisiae (strain ATCC 204508 / S288c) (Baker's yeast).